The following is a 394-amino-acid chain: ATP phosphoribosyltransferase regulatory subunit (394 aa).

Belongs to the class-II aminoacyl-tRNA synthetase family. HisZ subfamily. Heteromultimer composed of HisG and HisZ subunits.

It is found in the cytoplasm. The protein operates within amino-acid biosynthesis; L-histidine biosynthesis; L-histidine from 5-phospho-alpha-D-ribose 1-diphosphate: step 1/9. Functionally, required for the first step of histidine biosynthesis. May allow the feedback regulation of ATP phosphoribosyltransferase activity by histidine. This is ATP phosphoribosyltransferase regulatory subunit from Pseudomonas paraeruginosa (strain DSM 24068 / PA7) (Pseudomonas aeruginosa (strain PA7)).